Here is a 587-residue protein sequence, read N- to C-terminus: Bifunctional lycopene cyclase/phytoene synthase (587 aa).

The tract at residues 1-242 is lycopene beta-cyclase; sequence MGYDYALVHV…IVFGIAAFDK (242 aa). 7 helical membrane passes run 8–28, 35–55, 77–97, 120–140, 150–170, 172–192, and 220–240; these read VHVKYTIPLAALLTVFSYPVF, RTLFIVTIAFVATIPWDSYLI, AEELFFFIIQTYITAQLYIIL, GKLVGQLALSGSVLLGTWLIA, LILVWACTFALFTWTITAHFL, ALPLACTALPILLPTVYLWIV, and IEEATFFLVTNMLIVFGIAAF. The phytoene synthase stretch occupies residues 249–587; it reads AFPEKFDKPA…WVAWSTLMAA (339 aa).

This sequence in the N-terminal section; belongs to the lycopene beta-cyclase family. It in the C-terminal section; belongs to the phytoene/squalene synthase family.

The protein resides in the membrane. It carries out the reaction all-trans-lycopene = gamma-carotene. It catalyses the reaction gamma-carotene = all-trans-beta-carotene. The catalysed reaction is 2 (2E,6E,10E)-geranylgeranyl diphosphate = 15-cis-phytoene + 2 diphosphate. The protein operates within carotenoid biosynthesis; beta-carotene biosynthesis. It participates in carotenoid biosynthesis; phytoene biosynthesis; all-trans-phytoene from geranylgeranyl diphosphate: step 1/1. Functionally, bifunctional enzyme that catalyzes the reactions from geranylgeranyl diphosphate to phytoene (phytoene synthase) and lycopene to beta-carotene via the intermediate gamma-carotene (lycopene cyclase). The chain is Bifunctional lycopene cyclase/phytoene synthase from Colletotrichum graminicola (strain M1.001 / M2 / FGSC 10212) (Maize anthracnose fungus).